Consider the following 394-residue polypeptide: Probable pectate lyase 16 (394 aa).

A signal peptide spans 1-22; it reads MTLFTVSCLLVVLFLCHSLVHA. Positions 192, 216, and 220 each coordinate Ca(2+). The active site involves Arg-272.

Belongs to the polysaccharide lyase 1 family. Ca(2+) serves as cofactor.

The catalysed reaction is Eliminative cleavage of (1-&gt;4)-alpha-D-galacturonan to give oligosaccharides with 4-deoxy-alpha-D-galact-4-enuronosyl groups at their non-reducing ends.. Its pathway is glycan metabolism; pectin degradation; 2-dehydro-3-deoxy-D-gluconate from pectin: step 2/5. This chain is Probable pectate lyase 16, found in Arabidopsis thaliana (Mouse-ear cress).